The chain runs to 805 residues: 1,4-alpha-glucan-branching enzyme 2-2, chloroplastic/amyloplastic (805 aa).

The N-terminal 32 residues, 1–32 (MVVIHGVSLTPRFTLPSRPLNTGFNAGNSTLS), are a transit peptide targeting the chloroplast. The active-site Nucleophile is the Asp451. Glu506 (proton donor) is an active-site residue.

It belongs to the glycosyl hydrolase 13 family. GlgB subfamily. In terms of assembly, monomer. As to expression, expressed in seedlings, roots, stems, leaves, inflorescences, seeds and flowers.

It localises to the plastid. The protein localises to the chloroplast stroma. The protein resides in the amyloplast. The catalysed reaction is Transfers a segment of a (1-&gt;4)-alpha-D-glucan chain to a primary hydroxy group in a similar glucan chain.. The protein operates within glycan biosynthesis; starch biosynthesis. Catalyzes the formation of the alpha-1,6-glucosidic linkages in starch by scission of a 1,4-alpha-linked oligosaccharide from growing alpha-1,4-glucan chains and the subsequent attachment of the oligosaccharide to the alpha-1,6 position. The sequence is that of 1,4-alpha-glucan-branching enzyme 2-2, chloroplastic/amyloplastic (SBE2.2) from Arabidopsis thaliana (Mouse-ear cress).